The primary structure comprises 276 residues: Rhamnulose-1-phosphate aldolase (276 aa).

Glu-117 is an active-site residue. His-141, His-143, and His-212 together coordinate Zn(2+).

The protein belongs to the aldolase class II family. RhaD subfamily. In terms of assembly, homotetramer. Requires Zn(2+) as cofactor.

The protein localises to the cytoplasm. The catalysed reaction is L-rhamnulose 1-phosphate = (S)-lactaldehyde + dihydroxyacetone phosphate. It participates in carbohydrate degradation; L-rhamnose degradation; glycerone phosphate from L-rhamnose: step 3/3. Catalyzes the reversible cleavage of L-rhamnulose-1-phosphate to dihydroxyacetone phosphate (DHAP) and L-lactaldehyde. The sequence is that of Rhamnulose-1-phosphate aldolase from Klebsiella pneumoniae subsp. pneumoniae (strain ATCC 700721 / MGH 78578).